We begin with the raw amino-acid sequence, 693 residues long: Elongation factor G (693 aa).

A tr-type G domain is found at 8-282 (EKTRNIGIMA…AVIDYLPSPL (275 aa)). Residues 17 to 24 (AHVDAGKT), 81 to 85 (DTPGH), and 135 to 138 (NKMD) each bind GTP.

The protein belongs to the TRAFAC class translation factor GTPase superfamily. Classic translation factor GTPase family. EF-G/EF-2 subfamily.

Its subcellular location is the cytoplasm. Its function is as follows. Catalyzes the GTP-dependent ribosomal translocation step during translation elongation. During this step, the ribosome changes from the pre-translocational (PRE) to the post-translocational (POST) state as the newly formed A-site-bound peptidyl-tRNA and P-site-bound deacylated tRNA move to the P and E sites, respectively. Catalyzes the coordinated movement of the two tRNA molecules, the mRNA and conformational changes in the ribosome. The polypeptide is Elongation factor G (Streptococcus pneumoniae (strain CGSP14)).